A 795-amino-acid polypeptide reads, in one-letter code: ATP-dependent RNA helicase DHX15 (795 aa).

Positions methionine 1–leucine 111 are disordered. Position 15 is a phosphoserine (serine 15). Positions alanine 20–arginine 62 are enriched in basic and acidic residues. Low complexity predominate over residues alanine 79–serine 110. Residues threonine 147–proline 313 form the Helicase ATP-binding domain. Glycine 160 to threonine 167 is a binding site for ATP. Residues aspartate 260–histidine 263 carry the DEAH box motif. The Helicase C-terminal domain occupies threonine 338–glycine 518. At lysine 488 the chain carries N6-acetyllysine. Residue lysine 786 forms a Glycyl lysine isopeptide (Lys-Gly) (interchain with G-Cter in SUMO2) linkage.

It belongs to the DEAD box helicase family. DEAH subfamily. DDX15/PRP43 sub-subfamily. Component of the U11/U12 snRNPs that are part of the U12-type spliceosome. Identified in the Intron Large spliceosome complex (IL, also named intron lariat spliceosome), a post-mRNA release spliceosomal complex containing the excised intron, U2, U5 and U6 snRNPs, and splicing factors; the association may be transient. The IL complex exists in two distinct conformations, one with the DHX15 (ILS2) and one without (ILS1). Interacts with TFIP11 (via G-patch domain); indicative for a recruitment to the IL complex. Interacts with SSB/La. Interacts with GPATCH2 (via G-patch domain); promoting the RNA helicase activity. Interacts with NKRF (via G-patch domain); promoting the RNA helicase activity. Interacts with NLRP6. Ubiquitous.

The protein resides in the nucleus. It is found in the nucleolus. The enzyme catalyses ATP + H2O = ADP + phosphate + H(+). With respect to regulation, ATPase activity is enhanced upon binding to G-patch domain-containing proteins. G-patch domain-containing proteins act like a brace that tethers mobile sections of DHX15 together, stabilizing a functional conformation with high RNA affinity, thereby promoting the ATPase activity. Its function is as follows. RNA helicase involved in mRNA processing and antiviral innate immunity. Pre-mRNA processing factor involved in disassembly of spliceosomes after the release of mature mRNA. In cooperation with TFIP11 seem to be involved in the transition of the U2, U5 and U6 snRNP-containing IL complex to the snRNP-free IS complex leading to efficient debranching and turnover of excised introns. Plays a key role in antiviral innate immunity by promoting both MAVS-dependent signaling and NLRP6 inflammasome. Acts as an RNA virus sensor: recognizes and binds viral double stranded RNA (dsRNA) and activates the MAVS-dependent signaling to produce interferon-beta and interferon lambda-3 (IFNL3). Involved in intestinal antiviral innate immunity together with NLRP6: recognizes and binds viral dsRNA and promotes activation of the NLRP6 inflammasome in intestinal epithelial cells to restrict infection by enteric viruses. The NLRP6 inflammasome acts by promoting maturation and secretion of IL18 in the extracellular milieu. Also involved in antibacterial innate immunity by promoting Wnt-induced antimicrobial protein expression in Paneth cells. In Mus musculus (Mouse), this protein is ATP-dependent RNA helicase DHX15.